We begin with the raw amino-acid sequence, 215 residues long: Thiopurine S-methyltransferase (215 aa).

S-adenosyl-L-methionine contacts are provided by tryptophan 10, leucine 45, glutamate 66, and arginine 123.

This sequence belongs to the class I-like SAM-binding methyltransferase superfamily. TPMT family.

It is found in the cytoplasm. It carries out the reaction S-adenosyl-L-methionine + a thiopurine = S-adenosyl-L-homocysteine + a thiopurine S-methylether.. This Pseudomonas putida (strain W619) protein is Thiopurine S-methyltransferase.